The primary structure comprises 651 residues: Mitogen-activated protein kinase kinase kinase 3 (651 aa).

The 263-residue stretch at 68–330 folds into the Protein kinase domain; sequence WRKGELIGCG…ATELLQHPFV (263 aa). ATP-binding positions include 74–82 and K97; that span reads IGCGAFGRV. A coiled-coil region spans residues 105–130; sequence SASKEKTQGHIRELEEEVQLLKNLSH. Residues K108 and K110 each participate in a glycyl lysine isopeptide (Lys-Gly) (interchain with G-Cter in ubiquitin) cross-link. Residue D196 is the Proton acceptor of the active site. The interval 573–608 is disordered; sequence MPSPLKSSKRTLNTSRVMQSGTEPTQVNESTKKGVN. Over residues 582-608 the composition is skewed to polar residues; the sequence is RTLNTSRVMQSGTEPTQVNESTKKGVN. Residues 618-641 are a coiled coil; that stretch reads RKWEEELYEELERHRENLRHAGAG.

The protein belongs to the protein kinase superfamily. STE Ser/Thr protein kinase family. MAP kinase kinase kinase subfamily. Interacts with NACK2 and MKK6. In terms of tissue distribution, expressed in roots and flowers.

Its subcellular location is the cytoplasm. It localises to the cytoskeleton. The enzyme catalyses L-seryl-[protein] + ATP = O-phospho-L-seryl-[protein] + ADP + H(+). It carries out the reaction L-threonyl-[protein] + ATP = O-phospho-L-threonyl-[protein] + ADP + H(+). Involved in cortical microtubules organization and stabilization by regulating the phosphorylation state of microtubule-associated proteins such as MAP65-1. This is Mitogen-activated protein kinase kinase kinase 3 (ANP3) from Arabidopsis thaliana (Mouse-ear cress).